Here is a 438-residue protein sequence, read N- to C-terminus: Serine hydroxymethyltransferase 1 (438 aa).

Residues L130 and 134–136 (GHL) each bind (6S)-5,6,7,8-tetrahydrofolate. An N6-(pyridoxal phosphate)lysine modification is found at K239.

Belongs to the SHMT family. In terms of assembly, homodimer. It depends on pyridoxal 5'-phosphate as a cofactor.

The protein localises to the cytoplasm. The catalysed reaction is (6R)-5,10-methylene-5,6,7,8-tetrahydrofolate + glycine + H2O = (6S)-5,6,7,8-tetrahydrofolate + L-serine. Its pathway is one-carbon metabolism; tetrahydrofolate interconversion. The protein operates within amino-acid biosynthesis; glycine biosynthesis; glycine from L-serine: step 1/1. In terms of biological role, catalyzes the reversible interconversion of serine and glycine with tetrahydrofolate (THF) serving as the one-carbon carrier. This reaction serves as the major source of one-carbon groups required for the biosynthesis of purines, thymidylate, methionine, and other important biomolecules. Also exhibits THF-independent aldolase activity toward beta-hydroxyamino acids, producing glycine and aldehydes, via a retro-aldol mechanism. Thus, is able to catalyze the cleavage of L-allo-threonine. This chain is Serine hydroxymethyltransferase 1, found in Mycobacterium tuberculosis (strain ATCC 25618 / H37Rv).